We begin with the raw amino-acid sequence, 425 residues long: Glutamyl-tRNA reductase (425 aa).

Substrate is bound by residues 49–52 (TCNR), Ser-106, 111–113 (EPQ), and Gln-117. The Nucleophile role is filled by Cys-50. Residue 186-191 (GAGETI) participates in NADP(+) binding.

The protein belongs to the glutamyl-tRNA reductase family. In terms of assembly, homodimer.

The enzyme catalyses (S)-4-amino-5-oxopentanoate + tRNA(Glu) + NADP(+) = L-glutamyl-tRNA(Glu) + NADPH + H(+). Its pathway is porphyrin-containing compound metabolism; protoporphyrin-IX biosynthesis; 5-aminolevulinate from L-glutamyl-tRNA(Glu): step 1/2. Its function is as follows. Catalyzes the NADPH-dependent reduction of glutamyl-tRNA(Glu) to glutamate 1-semialdehyde (GSA). The chain is Glutamyl-tRNA reductase from Saccharophagus degradans (strain 2-40 / ATCC 43961 / DSM 17024).